The sequence spans 459 residues: Diaminopimelate decarboxylase (459 aa).

Lysine 89 carries the N6-(pyridoxal phosphate)lysine modification. Residues glycine 271 and 313 to 316 (EPGR) contribute to the pyridoxal 5'-phosphate site. Substrate contacts are provided by arginine 316, arginine 357, and tyrosine 361. The active-site Proton donor is the cysteine 388. Residues glutamate 389 and tyrosine 418 each coordinate substrate. Tyrosine 418 contributes to the pyridoxal 5'-phosphate binding site.

It belongs to the Orn/Lys/Arg decarboxylase class-II family. LysA subfamily. Homodimer. Pyridoxal 5'-phosphate is required as a cofactor.

The enzyme catalyses meso-2,6-diaminopimelate + H(+) = L-lysine + CO2. It functions in the pathway amino-acid biosynthesis; L-lysine biosynthesis via DAP pathway; L-lysine from DL-2,6-diaminopimelate: step 1/1. Its function is as follows. Specifically catalyzes the decarboxylation of meso-diaminopimelate (meso-DAP) to L-lysine. This chain is Diaminopimelate decarboxylase, found in Corynebacterium efficiens (strain DSM 44549 / YS-314 / AJ 12310 / JCM 11189 / NBRC 100395).